We begin with the raw amino-acid sequence, 260 residues long: Manganese transport system ATP-binding protein MntA (260 aa).

Positions Ile10–Pro245 constitute an ABC transporter domain. Position 43–50 (Gly43–Ser50) interacts with ATP.

The protein belongs to the ABC transporter superfamily.

Its function is as follows. Part of an ATP-driven transport system for manganese. The chain is Manganese transport system ATP-binding protein MntA (mntA) from Synechocystis sp. (strain ATCC 27184 / PCC 6803 / Kazusa).